Consider the following 284-residue polypeptide: Small ribosomal subunit protein uS5y/uS5u/uS5v (284 aa).

The span at 1-19 (MAERGGESGAERGGDRGDF) shows a compositional bias: basic and acidic residues. The interval 1-51 (MAERGGESGAERGGDRGDFGRGFGGGRGGGRGRDRGPRGRGRRGGRASEET) is disordered. Gly residues predominate over residues 20–29 (GRGFGGGRGG). The S5 DRBM domain occupies 95-158 (LKDEVMKIMP…ILAKLSVVPV (64 aa)).

The protein belongs to the universal ribosomal protein uS5 family.

This chain is Small ribosomal subunit protein uS5y/uS5u/uS5v (RPS2B), found in Arabidopsis thaliana (Mouse-ear cress).